We begin with the raw amino-acid sequence, 896 residues long: Rho GTPase-activating protein gacM (896 aa).

Positions 1-97 are disordered; it reads MSSFIGWKKN…SSNDTIGKSS (97 aa). Residues 10-26 show a composition bias toward low complexity; it reads NSNSGGTPGASPTSSSP. The segment covering 27–38 has biased composition (polar residues); the sequence is LNSTISNANSVS. Composition is skewed to low complexity over residues 45 to 57 and 65 to 97; these read SISN…LSSS and NSNN…GKSS. In terms of domain architecture, Rho-GAP spans 139 to 330; it reads QPINPNTEFG…LWIEEFDMIS (192 aa). Composition is skewed to low complexity over residues 375 to 391, 400 to 427, 448 to 460, and 473 to 506; these read IQQQ…QSHP, SSLS…LLPT, PTPT…TPQT, and NNNS…NNNN. 2 disordered regions span residues 375 to 514 and 701 to 770; these read IQQQ…GSPL and LPTG…ENQI. The span at 702 to 711 shows a compositional bias: polar residues; sequence PTGSSWSDFE. 2 stretches are compositionally biased toward low complexity: residues 712-743 and 751-761; these read NNSS…NSSP and SNGLNSSSNSN.

The protein resides in the cytoplasm. Functionally, rho GTPase-activating protein involved in the signal transduction pathway. The protein is Rho GTPase-activating protein gacM (gacM) of Dictyostelium discoideum (Social amoeba).